The sequence spans 627 residues: UvrABC system protein C (627 aa).

In terms of domain architecture, GIY-YIG spans 22-100 (NNPGVYRMFN…IKRLRPRFNV (79 aa)). Residues 210–245 (QSVKDHLAAAMQAASADLDFEHAAVYRDRLAALSHV) form the UVR domain.

It belongs to the UvrC family. In terms of assembly, interacts with UvrB in an incision complex.

The protein localises to the cytoplasm. In terms of biological role, the UvrABC repair system catalyzes the recognition and processing of DNA lesions. UvrC both incises the 5' and 3' sides of the lesion. The N-terminal half is responsible for the 3' incision and the C-terminal half is responsible for the 5' incision. This Brucella abortus biovar 1 (strain 9-941) protein is UvrABC system protein C.